The primary structure comprises 520 residues: Ribonuclease Y 2 (520 aa).

A helical membrane pass occupies residues 7–23; sequence VVLLLASIGVGYGLRAK. Residues 206–269 enclose the KH domain; the sequence is NHRSFIAENA…AVAMETMEMI (64 aa). One can recognise an HD domain in the interval 332 to 425; sequence ILEHSIETAK…VEAADAISGA (94 aa).

The protein belongs to the RNase Y family.

The protein resides in the cell membrane. Functionally, endoribonuclease that initiates mRNA decay. This chain is Ribonuclease Y 2, found in Pediococcus pentosaceus (strain ATCC 25745 / CCUG 21536 / LMG 10740 / 183-1w).